A 241-amino-acid chain; its full sequence is MGKRLIIQRRGRGTPAHRVASHRFKDKIRYRSYDALEKEGSIKGIVTDIVHDPARTAPIAEVKFENGEKKFILAPESIQIDDEIECGISAPIKFGNTLPLAEIPEGTPIYDIENTPGDGGRFVRSSGTYASLITHDANQSVVELPSGELKYLNPRCRASIGVVAGGGRKEKPFLKAGNRWHAYKAKGKKFMTVRGVAMNAVDHPHGGGNRQHPGRPTTVSRHAPPGRKVGSIAAKRTGLKR.

Residues 201–241 (VDHPHGGGNRQHPGRPTTVSRHAPPGRKVGSIAAKRTGLKR) form a disordered region.

It belongs to the universal ribosomal protein uL2 family. Part of the 50S ribosomal subunit. Forms a bridge to the 30S subunit in the 70S ribosome.

Functionally, one of the primary rRNA binding proteins. Required for association of the 30S and 50S subunits to form the 70S ribosome, for tRNA binding and peptide bond formation. It has been suggested to have peptidyltransferase activity; this is somewhat controversial. Makes several contacts with the 16S rRNA in the 70S ribosome. In Methanobrevibacter smithii (strain ATCC 35061 / DSM 861 / OCM 144 / PS), this protein is Large ribosomal subunit protein uL2.